Consider the following 354-residue polypeptide: Protein RecA (354 aa).

ATP is bound at residue 78 to 85 (GPESSGKT).

It belongs to the RecA family.

Its subcellular location is the cytoplasm. Functionally, can catalyze the hydrolysis of ATP in the presence of single-stranded DNA, the ATP-dependent uptake of single-stranded DNA by duplex DNA, and the ATP-dependent hybridization of homologous single-stranded DNAs. It interacts with LexA causing its activation and leading to its autocatalytic cleavage. In Zymomonas mobilis subsp. mobilis (strain ATCC 31821 / ZM4 / CP4), this protein is Protein RecA.